A 602-amino-acid chain; its full sequence is Potassium-transporting ATPase potassium-binding subunit (602 aa).

4 helical membrane passes run 5–25 (AMLQ…PLGA), 65–85 (GYAV…YALQ), 136–156 (GLTV…IALI), and 179–199 (LYVL…QGAI). The disordered stretch occupies residues 221-248 (QDAKGNPVLGKDGKPVMEDKTSQTQTLP). The segment covering 231–241 (KDGKPVMEDKT) has biased composition (basic and acidic residues). A run of 6 helical transmembrane segments spans residues 283–303 (LANF…CFLF), 312–332 (QGWA…VVET), 419–439 (GLYG…LMVG), 458–478 (AITI…AVSL), 523–543 (IMTG…ILAI), and 566–586 (LFVT…YVPA).

The protein belongs to the KdpA family. As to quaternary structure, the system is composed of three essential subunits: KdpA, KdpB and KdpC.

The protein resides in the cell inner membrane. Functionally, part of the high-affinity ATP-driven potassium transport (or Kdp) system, which catalyzes the hydrolysis of ATP coupled with the electrogenic transport of potassium into the cytoplasm. This subunit binds the periplasmic potassium ions and delivers the ions to the membrane domain of KdpB through an intramembrane tunnel. This is Potassium-transporting ATPase potassium-binding subunit from Chromobacterium violaceum (strain ATCC 12472 / DSM 30191 / JCM 1249 / CCUG 213 / NBRC 12614 / NCIMB 9131 / NCTC 9757 / MK).